We begin with the raw amino-acid sequence, 373 residues long: GDP-mannose 4,6 dehydratase 2 (373 aa).

A compositionally biased stretch (polar residues) spans 1-15 (MASENNGSRSDSESI). Residues 1–21 (MASENNGSRSDSESITAPKAD) are disordered. NADP(+) contacts are provided by residues 35–40 (GITGQD), Arg-60, 91–92 (DL), 113–117 (LAAQS), and Tyr-128. Ser-117 contacts substrate. Residue Ser-162 participates in substrate binding. Ser-162 is an active-site residue. Residues Glu-164 and Tyr-185 each act as nucleophile in the active site. Tyr-185 provides a ligand contact to substrate. Lys-189 serves as a coordination point for NADP(+). Asn-214 contributes to the substrate binding site. Positions 215 and 220 each coordinate NADP(+). Residues 220–228 (RGENFVTRK), Gly-247, Arg-253, and 314–317 (RPAE) contribute to the substrate site.

The protein belongs to the NAD(P)-dependent epimerase/dehydratase family. GDP-mannose 4,6-dehydratase subfamily. Homotetramer. Binds to GER1. Requires NADP(+) as cofactor. Expressed in roots, flowers, siliques, leaves and stems. Not expressed in the root meristem and the proximal part of the elongation zone, or in emerging lateral roots. Expressed in trichomes and guard cells, and in pollen just before anthesis.

It carries out the reaction GDP-alpha-D-mannose = GDP-4-dehydro-alpha-D-rhamnose + H2O. The protein operates within nucleotide-sugar biosynthesis; GDP-L-fucose biosynthesis via de novo pathway; GDP-L-fucose from GDP-alpha-D-mannose: step 1/2. Catalyzes the conversion of GDP-D-mannose to GDP-4-dehydro-6-deoxy-D-mannose. The chain is GDP-mannose 4,6 dehydratase 2 (MUR1) from Arabidopsis thaliana (Mouse-ear cress).